The following is a 283-amino-acid chain: Phosphatidylserine decarboxylase proenzyme (283 aa).

Active-site charge relay system; for autoendoproteolytic cleavage activity residues include D96, H152, and S250. The active-site Schiff-base intermediate with substrate; via pyruvic acid; for decarboxylase activity is the S250. S250 is subject to Pyruvic acid (Ser); by autocatalysis.

Belongs to the phosphatidylserine decarboxylase family. PSD-B subfamily. Prokaryotic type I sub-subfamily. As to quaternary structure, heterodimer of a large membrane-associated beta subunit and a small pyruvoyl-containing alpha subunit. Pyruvate is required as a cofactor. Post-translationally, is synthesized initially as an inactive proenzyme. Formation of the active enzyme involves a self-maturation process in which the active site pyruvoyl group is generated from an internal serine residue via an autocatalytic post-translational modification. Two non-identical subunits are generated from the proenzyme in this reaction, and the pyruvate is formed at the N-terminus of the alpha chain, which is derived from the carboxyl end of the proenzyme. The autoendoproteolytic cleavage occurs by a canonical serine protease mechanism, in which the side chain hydroxyl group of the serine supplies its oxygen atom to form the C-terminus of the beta chain, while the remainder of the serine residue undergoes an oxidative deamination to produce ammonia and the pyruvoyl prosthetic group on the alpha chain. During this reaction, the Ser that is part of the protease active site of the proenzyme becomes the pyruvoyl prosthetic group, which constitutes an essential element of the active site of the mature decarboxylase.

The protein resides in the cell membrane. The enzyme catalyses a 1,2-diacyl-sn-glycero-3-phospho-L-serine + H(+) = a 1,2-diacyl-sn-glycero-3-phosphoethanolamine + CO2. Its pathway is phospholipid metabolism; phosphatidylethanolamine biosynthesis; phosphatidylethanolamine from CDP-diacylglycerol: step 2/2. Functionally, catalyzes the formation of phosphatidylethanolamine (PtdEtn) from phosphatidylserine (PtdSer). The protein is Phosphatidylserine decarboxylase proenzyme of Acinetobacter baumannii (strain ATCC 17978 / DSM 105126 / CIP 53.77 / LMG 1025 / NCDC KC755 / 5377).